A 571-amino-acid polypeptide reads, in one-letter code: 5' exonuclease Apollo (571 aa).

Disordered stretches follow at residues 346-386 and 431-487; these read TSRP…TDRN and MDDN…SMHD. Composition is skewed to basic and acidic residues over residues 367–386 and 453–468; these read NHDD…TDRN and ECDH…EKSP. Residues 470–487 show a composition bias toward polar residues; that stretch reads MGSTNSGEMCSSMDSMHD. The short motif at 501–532 is the TBM element; the sequence is NPQSVTSAIPITLESEQFEHWLLENFTIPAEE.

It belongs to the DNA repair metallo-beta-lactamase (DRMBL) family. Interacts with terf2; the interaction is direct.

Its subcellular location is the chromosome. The protein resides in the telomere. It is found in the nucleus. The enzyme catalyses a beta-lactam + H2O = a substituted beta-amino acid. Functionally, 5'-3' exonuclease that plays a central role in telomere maintenance and protection during S-phase. Participates in the protection of telomeres against non-homologous end-joining (NHEJ)-mediated repair, thereby ensuring that telomeres do not fuse. Plays a key role in telomeric loop (T loop) formation by being recruited by terf2 at the leading end telomeres and by processing leading-end telomeres immediately after their replication via its exonuclease activity: generates 3' single-stranded overhang at the leading end telomeres avoiding blunt leading-end telomeres that are vulnerable to end-joining reactions and expose the telomere end in a manner that activates the DNA repair pathways. Possesses beta-lactamase activity, catalyzing the hydrolysis of penicillin G and nitrocefin. Exhibits no activity towards other beta-lactam antibiotic classes including cephalosporins (cefotaxime) and carbapenems (imipenem). The protein is 5' exonuclease Apollo (dclre1b) of Danio rerio (Zebrafish).